A 626-amino-acid chain; its full sequence is MKTPTDQRFDYVKIGLASPERIRQWGERTLPNGQVVGEVTKPETINYRTLKPEMDGLFCEKIFGPSKDWECWCGKYKRVRHRGIVCERCGVEVTESRVRRHRMGFIKLAAPVTHVWYLKGIPSYLSILLDMPLRDVEQIVYFNAYVVLDPGNAGNLSYKQLLSEDQWLEIEEEIYAEDSELVGIEVGIGAEAIQRLLQEINLEEEAERLRTEIVESKGQKRAKLIKRLRVIDNFIATGSQAEWMVLSVIPVIPPDLRPMVQLDGGRFATSDLNDLYRRVINRNNRLSRLQEILAPEIIVRNEKRMLQEAVDALIDNGRRGRTVVGANNRALKSLSDIIEGKQGRFRQNLLGKRVDYSGRSVIVVGPKLKIYQCGLPREMAIELFQPFVIHRLIKLGIVNNIKAAKKMIQRGDANVWHVLDEVITGHPVMLNRAPTLHRLGIQAFEPILVEGRAIQLHPLVCPAFNADFDGDQMAVHIPLSLEAQSEARLLMLACHNILSPATGRPIVAPSQDMVLGCYYLTAENPKAQKGGGRYFASMDDAIRAFDQGLVDLHASVWLRLPVGEKVKTNKPDEEVLETETLPDGSIWKYYRERKTREKDGEIISQYVRTTVGRIIYNKTILEALVV.

Positions 71, 73, 86, and 89 each coordinate Zn(2+). The Mg(2+) site is built by aspartate 467, aspartate 469, and aspartate 471.

Belongs to the RNA polymerase beta' chain family. RpoC1 subfamily. As to quaternary structure, in cyanobacteria the RNAP catalytic core is composed of 2 alpha, 1 beta, 1 beta', 1 gamma and 1 omega subunit. When a sigma factor is associated with the core the holoenzyme is formed, which can initiate transcription. The cofactor is Mg(2+). Zn(2+) serves as cofactor.

It carries out the reaction RNA(n) + a ribonucleoside 5'-triphosphate = RNA(n+1) + diphosphate. Its function is as follows. DNA-dependent RNA polymerase catalyzes the transcription of DNA into RNA using the four ribonucleoside triphosphates as substrates. The protein is DNA-directed RNA polymerase subunit gamma of Microcystis aeruginosa (strain NIES-843 / IAM M-2473).